The chain runs to 138 residues: Large ribosomal subunit protein uL16 (138 aa).

Positions 1 to 18 (MALMPKRVKHRKSQRGRI) are enriched in basic residues. Residues 1-21 (MALMPKRVKHRKSQRGRIKGN) are disordered.

Belongs to the universal ribosomal protein uL16 family. In terms of assembly, part of the 50S ribosomal subunit.

Binds 23S rRNA and is also seen to make contacts with the A and possibly P site tRNAs. This Rhodopirellula baltica (strain DSM 10527 / NCIMB 13988 / SH1) protein is Large ribosomal subunit protein uL16.